The primary structure comprises 202 residues: Small ribosomal subunit protein uS2 (202 aa).

The protein belongs to the universal ribosomal protein uS2 family.

This is Small ribosomal subunit protein uS2 (rps2) from Pyrococcus abyssi (strain GE5 / Orsay).